The following is a 358-amino-acid chain: Putative ZDHHC-type palmitoyltransferase 4 (358 aa).

Transmembrane regions (helical) follow at residues 28 to 48 (FVGF…TIIF), 57 to 77 (LFFI…TYGI), 171 to 191 (YFFL…AHSL), and 210 to 230 (LLVI…GSFG). Residues 127-177 (SYCKKCSKAKPPRCHHCSVCDKCVLKMDHHCPWIGGCVGFYNYRYFFLFLS) form the DHHC domain. Residues Asn255 and Asn296 are each glycosylated (N-linked (GlcNAc...) asparagine). Residues 302-358 (NNKNNENNENNENNEIDNHNNNNNNNNNNNNNEKEDNINENDNLISYDTDEYNRHKK) are disordered. Residues 305 to 332 (NNENNENNENNEIDNHNNNNNNNNNNNN) are compositionally biased toward low complexity.

Belongs to the DHHC palmitoyltransferase family.

The protein localises to the membrane. It carries out the reaction L-cysteinyl-[protein] + hexadecanoyl-CoA = S-hexadecanoyl-L-cysteinyl-[protein] + CoA. This Dictyostelium discoideum (Social amoeba) protein is Putative ZDHHC-type palmitoyltransferase 4.